The primary structure comprises 530 residues: Glutamate--cysteine ligase (530 aa).

This sequence belongs to the glutamate--cysteine ligase type 1 family. Type 1 subfamily.

It catalyses the reaction L-cysteine + L-glutamate + ATP = gamma-L-glutamyl-L-cysteine + ADP + phosphate + H(+). It functions in the pathway sulfur metabolism; glutathione biosynthesis; glutathione from L-cysteine and L-glutamate: step 1/2. This chain is Glutamate--cysteine ligase, found in Pseudomonas entomophila (strain L48).